Reading from the N-terminus, the 819-residue chain is ATP-dependent DNA helicase PIF4 (819 aa).

The N-terminal 84 residues, 1–84, are a transit peptide targeting the mitochondrion; it reads MLLNSTRTLL…RQASSAGHND (84 aa). A disordered region spans residues 76–101; the sequence is QASSAGHNDLGLQEKEKSSGDESAFS. 126–133 provides a ligand contact to ATP; it reads GGAGVGKS. The DNA-binding element occupies 734 to 754; it reads HIIYVAASRVKKFSQLRMINV.

The protein belongs to the helicase family. PIF1 subfamily. In terms of assembly, monomer. The cofactor is Mg(2+).

The protein localises to the mitochondrion matrix. The protein resides in the kinetoplast. It carries out the reaction Couples ATP hydrolysis with the unwinding of duplex DNA at the replication fork by translocating in the 5'-3' direction. This creates two antiparallel DNA single strands (ssDNA). The leading ssDNA polymer is the template for DNA polymerase III holoenzyme which synthesizes a continuous strand.. The catalysed reaction is ATP + H2O = ADP + phosphate + H(+). DNA-dependent ATPase and 5'-3' DNA helicase required for the maintenance of mitochondrial (kinetoplast) genome stability. The protein is ATP-dependent DNA helicase PIF4 of Trypanosoma brucei brucei (strain 927/4 GUTat10.1).